Reading from the N-terminus, the 436-residue chain is UPF0597 protein YhaM (436 aa).

It belongs to the UPF0597 family.

The polypeptide is UPF0597 protein YhaM (Shigella boydii serotype 18 (strain CDC 3083-94 / BS512)).